We begin with the raw amino-acid sequence, 66 residues long: Large ribosomal subunit protein bL33c (66 aa).

It belongs to the bacterial ribosomal protein bL33 family.

Its subcellular location is the plastid. It localises to the chloroplast. This is Large ribosomal subunit protein bL33c from Oenothera argillicola (Appalachian evening primrose).